Reading from the N-terminus, the 259-residue chain is METLQIAGKTFESRLFVGTGKFASSDLMEAAVLASQSRMVTVALKRVEIGRVEEDDMISRITRHPEITLLPNTSGVRSAKEAILAAELAREALQTNWLKLEVHPDPRYLLPDPIETLRATEELVRRGFIVLPYVQADPVLCKHLEEAGAATVMPLGAPIGSNRGLKTREMIRIIIEQSRVPVVIDAGIGAPSQAAEAMEMGADAVLVNTAIAVAEDPVSMATAFRLAVEAGRMAFEAKLGSVRSEAEASSPFTSFLNLK.

Lysine 99 serves as the catalytic Schiff-base intermediate with DXP. 1-deoxy-D-xylulose 5-phosphate-binding positions include glycine 160, 186–187, and 208–209; these read AG and NT.

Belongs to the ThiG family. In terms of assembly, homotetramer. Forms heterodimers with either ThiH or ThiS.

The protein localises to the cytoplasm. It catalyses the reaction [ThiS sulfur-carrier protein]-C-terminal-Gly-aminoethanethioate + 2-iminoacetate + 1-deoxy-D-xylulose 5-phosphate = [ThiS sulfur-carrier protein]-C-terminal Gly-Gly + 2-[(2R,5Z)-2-carboxy-4-methylthiazol-5(2H)-ylidene]ethyl phosphate + 2 H2O + H(+). The protein operates within cofactor biosynthesis; thiamine diphosphate biosynthesis. Functionally, catalyzes the rearrangement of 1-deoxy-D-xylulose 5-phosphate (DXP) to produce the thiazole phosphate moiety of thiamine. Sulfur is provided by the thiocarboxylate moiety of the carrier protein ThiS. In vitro, sulfur can be provided by H(2)S. The protein is Thiazole synthase of Porphyromonas gingivalis (strain ATCC BAA-308 / W83).